We begin with the raw amino-acid sequence, 483 residues long: Regulatory protein ViaA (483 aa).

It belongs to the ViaA family. In terms of assembly, homodimer. Interacts with RavA.

It localises to the cytoplasm. Its function is as follows. Component of the RavA-ViaA chaperone complex, which may act on the membrane to optimize the function of some of the respiratory chains. ViaA stimulates the ATPase activity of RavA. The protein is Regulatory protein ViaA of Salmonella choleraesuis (strain SC-B67).